Here is a 446-residue protein sequence, read N- to C-terminus: D(3) dopamine receptor (446 aa).

The Extracellular segment spans residues 1–32; that stretch reads MAPLSQISSHINSTCGAENSTGVNRARPHAYY. N-linked (GlcNAc...) asparagine glycosylation is found at Asn-12 and Asn-19. Residues 33 to 55 form a helical membrane-spanning segment; the sequence is ALSYCALILAIIFGNGLVCAAVL. Residues 56–65 lie on the Cytoplasmic side of the membrane; sequence RERALQTTTN. The helical transmembrane segment at 66–88 threads the bilayer; that stretch reads YLVVSLAVADLLVATLVMPWVVY. Residues 89-104 are Extracellular-facing; the sequence is LEVTGGVWNFSRICCD. N-linked (GlcNAc...) asparagine glycosylation is present at Asn-97. A disulfide bond links Cys-103 and Cys-181. Residues 105-126 form a helical membrane-spanning segment; sequence VFVTLDVMMCTASILNLCAISI. Residues 127–149 lie on the Cytoplasmic side of the membrane; sequence DRYTAVVMPVHYQHGTGQSSCRR. Residues 150 to 170 traverse the membrane as a helical segment; that stretch reads VALMITAVWVLAFAVSCPLLF. The Extracellular portion of the chain corresponds to 171 to 187; sequence GFNTTGDPSICSISNPD. An N-linked (GlcNAc...) asparagine glycan is attached at Asn-173. Residues 188-209 form a helical membrane-spanning segment; that stretch reads FVIYSSVVSFYVPFGVTVLVYA. Residues 210–375 lie on the Cytoplasmic side of the membrane; sequence RIYMVLRQRR…VPLREKKATQ (166 aa). A helical membrane pass occupies residues 376-397; sequence MVVIVLGAFIVCWLPFFLTHVL. Residues 398–412 lie on the Extracellular side of the membrane; that stretch reads NTHCQACHVSPELYR. Cys-401 and Cys-404 are oxidised to a cystine. The chain crosses the membrane as a helical span at residues 413 to 432; it reads ATTWLGYVNSALNPVIYTTF. The Cytoplasmic segment spans residues 433–446; sequence NIEFRKAFLKILSC.

Belongs to the G-protein coupled receptor 1 family. As to quaternary structure, interacts with CLIC6. Interacts with GRK4. Interacts with PALM. Interacts with FLNA (via filamin repeat 21); increases PKA-mediated phosphorylation of FLNA. Post-translationally, phosphorylated by GRK4. Palmitoylated.

The protein localises to the cell membrane. In terms of biological role, dopamine receptor whose activity is mediated by G proteins which inhibit adenylyl cyclase. Promotes cell proliferation. The chain is D(3) dopamine receptor (Drd3) from Mus musculus (Mouse).